We begin with the raw amino-acid sequence, 521 residues long: Proactivator polypeptide-like 1 (521 aa).

The first 17 residues, 1–17 (MLCALLLLPSLLGATRA), serve as a signal peptide directing secretion. Residues 18–59 (SPTSGPQECAKGSTVWCQDLQTAARCGAVGYCQGAVWNKPTA) constitute a propeptide that is removed on maturation. Residues 19 to 59 (PTSGPQECAKGSTVWCQDLQTAARCGAVGYCQGAVWNKPTA) enclose the Saposin A-type 1 domain. 2 Saposin B-type domains span residues 60-144 (KSLP…EPLQ) and 180-258 (EGAL…EELG). 3 disulfides stabilise this stretch: C64–C140, C67–C134, and C95–C107. The propeptide occupies 146-180 (HLATLRPLSKEDTFEAVAPFMANGPLTFHPRQAPE). Cystine bridges form between C184-C254, C187-C248, and C213-C224. N201 is a glycosylation site (N-linked (GlcNAc...) asparagine). A propeptide spanning residues 259-288 (APARLTQVVAMDGVPSLELGLPRKQSEMQM) is cleaved from the precursor. Saposin B-type domains lie at 290–370 (AGVT…GNRR) and 392–473 (QGSF…HGPR). 3 cysteine pairs are disulfide-bonded: C294–C366, C297–C360, and C325–C336. N311 carries an N-linked (GlcNAc...) asparagine glycan. Positions 370–391 (RRARAVHDAYAIVPSPEWDAEN) are excised as a propeptide. 3 disulfide bridges follow: C396-C469, C399-C463, and C427-C438. Residues 474-521 (TPLLGTDQCALGPSFWCRSQEAAKLCNAVQHCQKHVWKEMHLHAGEHA) constitute a propeptide that is removed on maturation. In terms of domain architecture, Saposin A-type 2 spans 475–515 (PLLGTDQCALGPSFWCRSQEAAKLCNAVQHCQKHVWKEMHL).

It is found in the secreted. Its function is as follows. May activate the lysosomal degradation of sphingolipids. The polypeptide is Proactivator polypeptide-like 1 (PSAPL1) (Homo sapiens (Human)).